Here is an 87-residue protein sequence, read N- to C-terminus: Tachykinin-1 (87 aa).

A signal peptide spans 1–22 (MIRVGLILCCIFIAGVFEASSA). Residues 23 to 37 (DDMLTAHNLIKRSEV) constitute a propeptide that is removed on maturation. Position 49 is a methionine amide (Met-49). Residues 52 to 87 (SEELTRRLIQHPGSMSETSKRGPPKKVSRRPYILKK) constitute a propeptide that is removed on maturation. The tract at residues 61–87 (QHPGSMSETSKRGPPKKVSRRPYILKK) is disordered. The span at 73–87 (GPPKKVSRRPYILKK) shows a compositional bias: basic residues.

This sequence belongs to the tachykinin family. As to expression, expressed in the posterior salivary gland and more specifically in the mucus-secreting gland cells.

The protein resides in the secreted. Its function is as follows. Tachykinins are active peptides which excite neurons, evoke behavioral responses, are potent vasodilators and secretagogues, and contract (directly or indirectly) many smooth muscles. This is Tachykinin-1 from Octopus vulgaris (Common octopus).